The following is a 231-amino-acid chain: Thymidylate kinase (231 aa).

10-17 contacts ATP; the sequence is GGEGAGKT.

This sequence belongs to the thymidylate kinase family.

It carries out the reaction dTMP + ATP = dTDP + ADP. Its function is as follows. Phosphorylation of dTMP to form dTDP in both de novo and salvage pathways of dTTP synthesis. This is Thymidylate kinase from Acaryochloris marina (strain MBIC 11017).